A 332-amino-acid chain; its full sequence is Caffeoylshikimate esterase (332 aa).

Low complexity predominate over residues 1–13 (MPSEAESSANSAP). A disordered region spans residues 1–26 (MPSEAESSANSAPATPPPPPNFWGTM). Serine 147 (nucleophile) is an active-site residue. Active-site charge relay system residues include aspartate 268 and histidine 298.

This sequence belongs to the AB hydrolase superfamily. Monoacylglycerol lipase family. Interacts with ACBP2. Expressed in vasculature of roots and leaves, stems, flowers and siliques.

It is found in the cell membrane. The enzyme catalyses 5-O-[(E)-caffeoyl]-shikimate + H2O = shikimate + (E)-caffeate + H(+). Its function is as follows. Esterase involved in the biosynthesis of lignin. Hydrolyzes caffeoylshikimate into caffeate and shikimate. Together with 4-coumarate--CoA ligase (4CL), acts on an alternative reaction for the formation of caffeoyl-CoA and bypasses the second reaction of shikimate O-hydroxycinnamoyltransferase (HST). Also accepts 4-coumaroylshikimate as substrate, but with lower activity. According to PubMed:20345607 and PubMed:22915575, possesses monoacylglycerol O-acyltransferase, monoacylglycerol lipase and lysophospholipase activities in vitro. With the association of ACBP2, may promote the degradation of lysophosphatidylcholine and detoxify the peroxidized membrane in response to cadmium-induced oxidative stress. However these results require additional confirmation in vivo. The sequence is that of Caffeoylshikimate esterase (CSE) from Arabidopsis thaliana (Mouse-ear cress).